A 461-amino-acid polypeptide reads, in one-letter code: MGMLRWGVESLQNPDELIPVLRMIYADKFGKIKPKDEDRGFCYEILNLVSRSFAIVIQQLPAQLRDPVCIFYLVLRALDTVEDDMKIAATTKIPLLRDFYEKISDRSFRMTAGDQKDYIRLLDQYPKVTSVFLKLTPREQEIIADITKRMGNGMADFVHKGVPDTVGDYDLYCHYVAGVVGLGLSQLFVASGLQSPSLTRSEDLSNHMGLFLQKTNIIRDYFEDINELPAPRMFWPREIWGKYANNLAEFKDPANKAAAMCCLNEMVTDALRHAVYCLQYMSMIEDPQIFNFCAIPQTMAFGTLSLCYNNYTIFTGPKAAVKLRRGTTAKLMYTSNNMFAMYRHFLNFAEKLEVRCNTETSEDPSVTTTLEHLHKIKAACKAGLARTKDDTFDELRSRLLALTGGSFYLAWTYNFLDLRGPGDLPTFLSVTQHWWSILIFLISIAVFFIPSRPSPRPTLSA.

Arg51 and Arg76 together coordinate NADP(+). Mg(2+) contacts are provided by Asp79, Glu82, and Asp83. The NADP(+) site is built by Arg219, Lys322, and Arg324. A helical transmembrane segment spans residues 430 to 450; sequence VTQHWWSILIFLISIAVFFIP.

It belongs to the phytoene/squalene synthase family. Mg(2+) is required as a cofactor.

The protein localises to the endoplasmic reticulum membrane. It catalyses the reaction 2 (2E,6E)-farnesyl diphosphate + NADPH + H(+) = squalene + 2 diphosphate + NADP(+). The catalysed reaction is 2 (2E,6E)-farnesyl diphosphate + NADH + H(+) = squalene + 2 diphosphate + NAD(+). Its function is as follows. Converts farnesyl diphosphate (FPP) into squalene, a precursor for sterol biosynthesis in eukaryotes. Does not possess botryococcene synthase activity. In Botryococcus braunii (Green alga), this protein is Squalene synthase BSS.